Here is a 544-residue protein sequence, read N- to C-terminus: Histone-arginine methyltransferase CARMER (544 aa).

One can recognise an SAM-dependent MTase PRMT-type domain in the interval 150–459; that stretch reads ASQYFQFYGY…QSYDVTIDLH (310 aa). Positions 163, 172, 196, 218, 247, and 275 each coordinate S-adenosyl-L-methionine. Residues 505–520 are compositionally biased toward polar residues; the sequence is DTQQQQQGSRNSNSML. The segment at 505–527 is disordered; the sequence is DTQQQQQGSRNSNSMLNGGLSVN. R514 carries the asymmetric dimethylarginine; by autocatalysis modification.

Belongs to the class I-like SAM-binding methyltransferase superfamily. Protein arginine N-methyltransferase family. Homodimer. In terms of processing, the dimethylated protein is the major form.

The protein resides in the cytoplasm. Its subcellular location is the nucleus. It carries out the reaction L-arginyl-[protein] + 2 S-adenosyl-L-methionine = N(omega),N(omega)-dimethyl-L-arginyl-[protein] + 2 S-adenosyl-L-homocysteine + 2 H(+). Methylates (mono- and asymmetric dimethylation) the guanidino nitrogens of arginyl residues in proteins. May methylate histone H3 at 'Arg-17' and activate transcription via chromatin remodeling. The polypeptide is Histone-arginine methyltransferase CARMER (Art4) (Drosophila grimshawi (Hawaiian fruit fly)).